Reading from the N-terminus, the 187-residue chain is Pterin-4-alpha-carbinolamine dehydratase 2, mitochondrial (187 aa).

The N-terminal 33 residues, methionine 1–phenylalanine 33, are a transit peptide targeting the mitochondrion.

The protein belongs to the pterin-4-alpha-carbinolamine dehydratase family.

It is found in the mitochondrion. It carries out the reaction (4aS,6R)-4a-hydroxy-L-erythro-5,6,7,8-tetrahydrobiopterin = (6R)-L-erythro-6,7-dihydrobiopterin + H2O. Involved in tetrahydrobiopterin biosynthesis. Possesses pterin-4-alpha-carbinolamine dehydratase activity when expressed in a bacterial heterolgous system. The sequence is that of Pterin-4-alpha-carbinolamine dehydratase 2, mitochondrial from Arabidopsis thaliana (Mouse-ear cress).